Consider the following 258-residue polypeptide: UPF0246 protein Shew_1093 (258 aa).

This sequence belongs to the UPF0246 family.

The protein is UPF0246 protein Shew_1093 of Shewanella loihica (strain ATCC BAA-1088 / PV-4).